The chain runs to 339 residues: Isopentenyl-diphosphate delta-isomerase (339 aa).

7-8 (RK) contacts substrate. FMN is bound by residues Ser65, 66–68 (SMT), Ser96, and Asn125. Position 96–98 (96–98 (SQR)) interacts with substrate. Gln160 contributes to the substrate binding site. Glu161 lines the Mg(2+) pocket. Residues Lys192, Thr222, and 293–294 (AG) each bind FMN.

Belongs to the IPP isomerase type 2 family. Homooctamer. Dimer of tetramers. FMN serves as cofactor. It depends on NADPH as a cofactor. Mg(2+) is required as a cofactor.

It is found in the cytoplasm. It carries out the reaction isopentenyl diphosphate = dimethylallyl diphosphate. Functionally, involved in the biosynthesis of isoprenoids. Catalyzes the 1,3-allylic rearrangement of the homoallylic substrate isopentenyl (IPP) to its allylic isomer, dimethylallyl diphosphate (DMAPP). The protein is Isopentenyl-diphosphate delta-isomerase of Vibrio parahaemolyticus serotype O3:K6 (strain RIMD 2210633).